The primary structure comprises 273 residues: Large ribosomal subunit protein uL2cy (273 aa).

2 disordered regions span residues 1–27 (MAIH…SNPR) and 224–273 (NPVD…RRRK).

It belongs to the universal ribosomal protein uL2 family. Part of the 50S ribosomal subunit.

The protein resides in the plastid. The protein localises to the chloroplast. The polypeptide is Large ribosomal subunit protein uL2cy (rpl2-B) (Liriodendron tulipifera (Tuliptree)).